Consider the following 1178-residue polypeptide: DNA-directed RNA polymerase subunit beta (1178 aa).

The disordered stretch occupies residues 1–37 (MLEGCILPDFGQSKTDVSPSQSRPQSSPNNSVPGAPN). Low complexity predominate over residues 17–33 (VSPSQSRPQSSPNNSVP).

It belongs to the RNA polymerase beta chain family. As to quaternary structure, the RNAP catalytic core consists of 2 alpha, 1 beta, 1 beta' and 1 omega subunit. When a sigma factor is associated with the core the holoenzyme is formed, which can initiate transcription.

It carries out the reaction RNA(n) + a ribonucleoside 5'-triphosphate = RNA(n+1) + diphosphate. DNA-dependent RNA polymerase catalyzes the transcription of DNA into RNA using the four ribonucleoside triphosphates as substrates. In Mycobacterium leprae (strain Br4923), this protein is DNA-directed RNA polymerase subunit beta.